Consider the following 264-residue polypeptide: Eukaryotic translation initiation factor 6 (264 aa).

It belongs to the eIF-6 family. In terms of assembly, monomer. Associates with the 60S ribosomal subunit.

The protein resides in the cytoplasm. The protein localises to the nucleus. It is found in the nucleolus. Its function is as follows. Binds to the 60S ribosomal subunit and prevents its association with the 40S ribosomal subunit to form the 80S initiation complex in the cytoplasm. May also be involved in ribosome biogenesis. The polypeptide is Eukaryotic translation initiation factor 6 (Toxoplasma gondii (strain ATCC 50861 / VEG)).